Reading from the N-terminus, the 196-residue chain is UPF0215 protein MM_1007 (196 aa).

The protein belongs to the UPF0215 family.

The sequence is that of UPF0215 protein MM_1007 from Methanosarcina mazei (strain ATCC BAA-159 / DSM 3647 / Goe1 / Go1 / JCM 11833 / OCM 88) (Methanosarcina frisia).